The chain runs to 267 residues: Outer membrane protein assembly factor BamD (267 aa).

Residues 1–16 (MKKILLTVSLGLALSA) form the signal peptide. Cys-17 carries N-palmitoyl cysteine lipidation. Cys-17 carries the S-diacylglycerol cysteine lipid modification.

Belongs to the BamD family. As to quaternary structure, part of the Bam complex.

Its subcellular location is the cell outer membrane. Functionally, part of the outer membrane protein assembly complex, which is involved in assembly and insertion of beta-barrel proteins into the outer membrane. Required for efficient transformation of Neisseria meningitidis by species-related DNA. This chain is Outer membrane protein assembly factor BamD, found in Neisseria meningitidis serogroup B (strain ATCC BAA-335 / MC58).